The primary structure comprises 610 residues: Elongation factor 4 (610 aa).

The region spanning 12–194 (EKIRNFSIIA…QIVEKVPAPQ (183 aa)) is the tr-type G domain. GTP is bound by residues 24-29 (DHGKST) and 141-144 (NKID).

Belongs to the TRAFAC class translation factor GTPase superfamily. Classic translation factor GTPase family. LepA subfamily.

It localises to the cell membrane. The catalysed reaction is GTP + H2O = GDP + phosphate + H(+). Required for accurate and efficient protein synthesis under certain stress conditions. May act as a fidelity factor of the translation reaction, by catalyzing a one-codon backward translocation of tRNAs on improperly translocated ribosomes. Back-translocation proceeds from a post-translocation (POST) complex to a pre-translocation (PRE) complex, thus giving elongation factor G a second chance to translocate the tRNAs correctly. Binds to ribosomes in a GTP-dependent manner. The polypeptide is Elongation factor 4 (Streptococcus thermophilus (strain ATCC BAA-250 / LMG 18311)).